Consider the following 710-residue polypeptide: TRP-like ion channel pkd2 (710 aa).

The N-terminal stretch at 1–23 (MRLWRSPLLLLVVVVELFSWADA) is a signal peptide. Helical transmembrane passes span 173–193 (WVMCMVIGIPLLIFLLISPVL), 197–217 (ALWEIVETMITLFQFAQIQAL), 322–342 (FFATGFSFFIILLFFSLLVAM), 376–396 (FFYRVIFVGFTQMSVLSMWEI), 404–424 (LAFLSMYVIVDMAVLLCYAFV), 466–486 (FFYFTFPLLLITLVRSMFIGF), 492–512 (KVQGCAMFGISVVVFALMVIL), 525–545 (IGVALMNLISGSFILVMCQAF), and 555–575 (IGIIFFALNAITMLLLILGIF). Phosphoserine is present on residues Ser-599 and Ser-632. The segment at 689-710 (RISENNNNAERRRKPLPNNAFR) is disordered.

This sequence belongs to the transient receptor potential (TRP) ion channel family. As to quaternary structure, interacts with rho1.

The protein localises to the cell membrane. It localises to the golgi apparatus membrane. Functionally, acts as a key signaling component in the regulation of cell shape and cell wall synthesis through interaction with GTPase Rho1. This is TRP-like ion channel pkd2 (pkd2) from Schizosaccharomyces pombe (strain 972 / ATCC 24843) (Fission yeast).